Here is a 597-residue protein sequence, read N- to C-terminus: Elongation factor 4 (597 aa).

One can recognise a tr-type G domain in the interval 2-184 (DHIRNFSIIA…ALVAKVPPPK (183 aa)). GTP is bound by residues 14–19 (DHGKST) and 131–134 (NKID).

It belongs to the TRAFAC class translation factor GTPase superfamily. Classic translation factor GTPase family. LepA subfamily.

The protein localises to the cell inner membrane. The enzyme catalyses GTP + H2O = GDP + phosphate + H(+). In terms of biological role, required for accurate and efficient protein synthesis under certain stress conditions. May act as a fidelity factor of the translation reaction, by catalyzing a one-codon backward translocation of tRNAs on improperly translocated ribosomes. Back-translocation proceeds from a post-translocation (POST) complex to a pre-translocation (PRE) complex, thus giving elongation factor G a second chance to translocate the tRNAs correctly. Binds to ribosomes in a GTP-dependent manner. The sequence is that of Elongation factor 4 from Paraburkholderia phytofirmans (strain DSM 17436 / LMG 22146 / PsJN) (Burkholderia phytofirmans).